Reading from the N-terminus, the 82-residue chain is Small ribosomal subunit protein uS17 (82 aa).

It belongs to the universal ribosomal protein uS17 family. In terms of assembly, part of the 30S ribosomal subunit.

In terms of biological role, one of the primary rRNA binding proteins, it binds specifically to the 5'-end of 16S ribosomal RNA. This Aeromonas hydrophila subsp. hydrophila (strain ATCC 7966 / DSM 30187 / BCRC 13018 / CCUG 14551 / JCM 1027 / KCTC 2358 / NCIMB 9240 / NCTC 8049) protein is Small ribosomal subunit protein uS17.